Here is a 176-residue protein sequence, read N- to C-terminus: Ribosome maturation factor RimM (176 aa).

Positions 96 to 176 (PEDEFYWRDL…QILVDWDPDF (81 aa)) constitute a PRC barrel domain.

The protein belongs to the RimM family. Binds ribosomal protein uS19.

The protein resides in the cytoplasm. Functionally, an accessory protein needed during the final step in the assembly of 30S ribosomal subunit, possibly for assembly of the head region. Essential for efficient processing of 16S rRNA. May be needed both before and after RbfA during the maturation of 16S rRNA. It has affinity for free ribosomal 30S subunits but not for 70S ribosomes. This chain is Ribosome maturation factor RimM, found in Shewanella woodyi (strain ATCC 51908 / MS32).